A 127-amino-acid polypeptide reads, in one-letter code: Putative platinum sensitivity protein 1 (127 aa).

The chain is Putative platinum sensitivity protein 1 (PSY1) from Saccharomyces cerevisiae (strain ATCC 204508 / S288c) (Baker's yeast).